A 351-amino-acid chain; its full sequence is Fructose-1,6-bisphosphatase class 1 (351 aa).

Mg(2+)-binding residues include Glu-94, Asp-113, Leu-115, and Asp-116. Substrate contacts are provided by residues 116–119 (DGSS) and Asn-207. Glu-279 contributes to the Mg(2+) binding site.

It belongs to the FBPase class 1 family. In terms of assembly, homotetramer. Mg(2+) is required as a cofactor.

It localises to the cytoplasm. The enzyme catalyses beta-D-fructose 1,6-bisphosphate + H2O = beta-D-fructose 6-phosphate + phosphate. Its pathway is carbohydrate biosynthesis; gluconeogenesis. The protein is Fructose-1,6-bisphosphatase class 1 of Methylobacterium radiotolerans (strain ATCC 27329 / DSM 1819 / JCM 2831 / NBRC 15690 / NCIMB 10815 / 0-1).